Reading from the N-terminus, the 405-residue chain is Deoxyguanosinetriphosphate triphosphohydrolase-like protein (405 aa).

In terms of domain architecture, HD spans 75–219; the sequence is RLTHTIEVAQ…AAIADDIAYN (145 aa).

It belongs to the dGTPase family. Type 2 subfamily.

This Agrobacterium fabrum (strain C58 / ATCC 33970) (Agrobacterium tumefaciens (strain C58)) protein is Deoxyguanosinetriphosphate triphosphohydrolase-like protein.